A 742-amino-acid chain; its full sequence is Vesicle-fusing ATPase (742 aa).

ATP is bound by residues 499–504 (NGMVDC) and 539–546 (SGSGKTAL). Thr544 contributes to the Mg(2+) binding site.

The protein belongs to the AAA ATPase family. Homohexamer. Binds to SNARE-SNAP complexes to form 20S particles. Mg(2+) is required as a cofactor.

It localises to the cytoplasm. It catalyses the reaction ATP + H2O = ADP + phosphate + H(+). Its function is as follows. Required for vesicle-mediated transport. Catalyzes the fusion of transport vesicles within the Golgi cisternae. Is also required for transport from the endoplasmic reticulum to the Golgi stack. Seems to function as a fusion protein required for the delivery of cargo proteins to all compartments of the Golgi stack independent of vesicle origin. Required for maintaining the normal morphology of the Golgi apparatus. This chain is Vesicle-fusing ATPase, found in Arabidopsis thaliana (Mouse-ear cress).